The primary structure comprises 218 residues: LexA repressor (218 aa).

Residues 28-48 (RAEIAAEFGFSSPNAAEEHLR) constitute a DNA-binding region (H-T-H motif). Residues Ser136 and Lys173 each act as for autocatalytic cleavage activity in the active site.

The protein belongs to the peptidase S24 family. As to quaternary structure, homodimer.

It catalyses the reaction Hydrolysis of Ala-|-Gly bond in repressor LexA.. In terms of biological role, represses a number of genes involved in the response to DNA damage (SOS response), including recA and lexA. In the presence of single-stranded DNA, RecA interacts with LexA causing an autocatalytic cleavage which disrupts the DNA-binding part of LexA, leading to derepression of the SOS regulon and eventually DNA repair. In Cupriavidus pinatubonensis (strain JMP 134 / LMG 1197) (Cupriavidus necator (strain JMP 134)), this protein is LexA repressor.